The sequence spans 155 residues: Lipoprotein signal peptidase (155 aa).

4 consecutive transmembrane segments (helical) span residues 7–27 (WFWIVAVIGLILDQVTKYITV), 39–59 (IIPGVFHFTYVINTGAAFSAF), 63–83 (VGWLKWLSLLVSLGLMAFAYF), and 96–116 (GFILAGAFGNGIDRFLFGYVV). Catalysis depends on residues aspartate 117 and aspartate 133. The chain crosses the membrane as a helical span at residues 126-146 (FPVFNLADVFINIGIICLLIS).

This sequence belongs to the peptidase A8 family.

It localises to the cell inner membrane. The enzyme catalyses Release of signal peptides from bacterial membrane prolipoproteins. Hydrolyzes -Xaa-Yaa-Zaa-|-(S,diacylglyceryl)Cys-, in which Xaa is hydrophobic (preferably Leu), and Yaa (Ala or Ser) and Zaa (Gly or Ala) have small, neutral side chains.. It participates in protein modification; lipoprotein biosynthesis (signal peptide cleavage). In terms of biological role, this protein specifically catalyzes the removal of signal peptides from prolipoproteins. This is Lipoprotein signal peptidase from Microcystis aeruginosa (strain NIES-843 / IAM M-2473).